The sequence spans 523 residues: Probable endopeptidase p60 (523 aa).

A signal peptide spans 1–27 (MNMKKATIAATAGIAVTAFAAPTIASA). A LysM 1 domain is found at 28–71 (STVVVEAGDTLWGIAQDNGTTVDALKKANKLTTDKIVPGQKLQV). The SH3b domain maps to 78 to 142 (KTEKSVSATW…VNGKYLGNAV (65 aa)). The tract at residues 146–188 (PSATPEVKQEETTQAAPAQQTKTEVKQATPAATTEKDAVETKT) is disordered. Over residues 157-167 (TTQAAPAQQTK) the composition is skewed to low complexity. The 44-residue stretch at 198-241 (TTHTVKSGDTIWALSVKYGASVQDLMSWNNLSSSSIYVGQNIAV) folds into the LysM 2 domain. 2 stretches are compositionally biased toward low complexity: residues 251–282 (PKAE…TTTT) and 290–318 (EKQT…TNAS). 2 disordered regions span residues 251–323 (PKAE…YTVK) and 367–408 (ATNT…SSSA). In terms of domain architecture, LysM 3 spans 318-361 (SSYTVKSGDTLGKIASTFGTTVSKIKALNGLTSDNLQVGDVLKV). One can recognise a NlpC/P60 domain in the interval 405–523 (SSSASAIIAE…GQYLVGFGRV (119 aa)). C435 functions as the Nucleophile in the catalytic mechanism. Catalysis depends on H485, which acts as the Proton acceptor. N497 is an active-site residue.

Belongs to the peptidase C40 family.

Functionally, this major extracellular protein may be involved in the invasion of non-professional phagocytic cells by Listeria. This is Probable endopeptidase p60 (iap) from Listeria seeligeri.